Reading from the N-terminus, the 941-residue chain is Isoleucine--tRNA ligase (941 aa).

A 'HIGH' region motif is present at residues 58–68 (PYANGDIHIGH). Glutamate 562 contributes to the L-isoleucyl-5'-AMP binding site. Residues 603 to 607 (KMSKS) carry the 'KMSKS' region motif. Lysine 606 contacts ATP. The Zn(2+) site is built by cysteine 904, cysteine 907, cysteine 924, and cysteine 927.

This sequence belongs to the class-I aminoacyl-tRNA synthetase family. IleS type 1 subfamily. Monomer. It depends on Zn(2+) as a cofactor.

It localises to the cytoplasm. It catalyses the reaction tRNA(Ile) + L-isoleucine + ATP = L-isoleucyl-tRNA(Ile) + AMP + diphosphate. In terms of biological role, catalyzes the attachment of isoleucine to tRNA(Ile). As IleRS can inadvertently accommodate and process structurally similar amino acids such as valine, to avoid such errors it has two additional distinct tRNA(Ile)-dependent editing activities. One activity is designated as 'pretransfer' editing and involves the hydrolysis of activated Val-AMP. The other activity is designated 'posttransfer' editing and involves deacylation of mischarged Val-tRNA(Ile). The sequence is that of Isoleucine--tRNA ligase from Alkalilimnicola ehrlichii (strain ATCC BAA-1101 / DSM 17681 / MLHE-1).